We begin with the raw amino-acid sequence, 202 residues long: Histone chaperone ASF1B (202 aa).

An interaction with histone H3 and CHAF1B region spans residues 1–156 (MAKVSVLNVA…TRFHINWDNN (156 aa)). Ser-198 is subject to Phosphoserine; by TLK2.

Belongs to the ASF1 family. As to quaternary structure, interacts with histone H3 (via C-terminus), including histone H3.1, H3.2 and H3.3, and histone H4; the interaction with H3 is direct. Interacts with the CHAF1A, CHAF1B and RBBP4 subunits of the CAF-1 complex. Interacts with HAT1, NASP and TAF1. Found in a soluble complex with NASP and histones H3 and H4; the interaction with NASP is probably indirect and mediated by H3-H4. Interacts with CDAN1. Found in a cytosolic complex with CDAN1, ASF1A, IPO4 and histones H3.1 and H4. Interacts with CREBBP. Post-translationally, phosphorylated by TLK2. Phosphorylated by TLK1. In terms of tissue distribution, highly expressed in germ cells. Restricted to premeiotic to meiotic stages during spermatogenesis.

The protein resides in the nucleus. It localises to the cytoplasm. Its subcellular location is the cytosol. Its function is as follows. Histone chaperone that facilitates histone deposition and histone exchange and removal during nucleosome assembly and disassembly. Cooperates with chromatin assembly factor 1 (CAF-1) to promote replication-dependent chromatin assembly. Also involved in the nuclear import of the histone H3-H4 dimer together with importin-4 (IPO4): specifically recognizes and binds newly synthesized histones with the monomethylation of H3 'Lys-9' (H3K9me1) and diacetylation at 'Lys-5' and 'Lys-12' of H4 (H4K5ac and H4K12ac) marks in the cytosol. Does not participate in replication-independent nucleosome deposition which is mediated by ASF1A and HIRA. Required for gonad development. The sequence is that of Histone chaperone ASF1B from Mus musculus (Mouse).